The primary structure comprises 303 residues: UDP-3-O-acyl-N-acetylglucosamine deacetylase (303 aa).

3 residues coordinate Zn(2+): histidine 78, histidine 237, and aspartate 241. Histidine 264 serves as the catalytic Proton donor.

It belongs to the LpxC family. Zn(2+) serves as cofactor.

It catalyses the reaction a UDP-3-O-[(3R)-3-hydroxyacyl]-N-acetyl-alpha-D-glucosamine + H2O = a UDP-3-O-[(3R)-3-hydroxyacyl]-alpha-D-glucosamine + acetate. The protein operates within glycolipid biosynthesis; lipid IV(A) biosynthesis; lipid IV(A) from (3R)-3-hydroxytetradecanoyl-[acyl-carrier-protein] and UDP-N-acetyl-alpha-D-glucosamine: step 2/6. Catalyzes the hydrolysis of UDP-3-O-myristoyl-N-acetylglucosamine to form UDP-3-O-myristoylglucosamine and acetate, the committed step in lipid A biosynthesis. This Saccharophagus degradans (strain 2-40 / ATCC 43961 / DSM 17024) protein is UDP-3-O-acyl-N-acetylglucosamine deacetylase.